A 176-amino-acid polypeptide reads, in one-letter code: NAD(P)H-quinone oxidoreductase subunit 6, chloroplastic (176 aa).

A run of 5 helical transmembrane segments spans residues 10–30 (FLLV…VLLP), 32–52 (PIYS…FYIL), 61–81 (AQLL…VMFM), 92–112 (LWTV…ISLI), and 152–172 (FFLP…GAIA).

Belongs to the complex I subunit 6 family. NDH is composed of at least 16 different subunits, 5 of which are encoded in the nucleus.

Its subcellular location is the plastid. It is found in the chloroplast thylakoid membrane. The enzyme catalyses a plastoquinone + NADH + (n+1) H(+)(in) = a plastoquinol + NAD(+) + n H(+)(out). It carries out the reaction a plastoquinone + NADPH + (n+1) H(+)(in) = a plastoquinol + NADP(+) + n H(+)(out). NDH shuttles electrons from NAD(P)H:plastoquinone, via FMN and iron-sulfur (Fe-S) centers, to quinones in the photosynthetic chain and possibly in a chloroplast respiratory chain. The immediate electron acceptor for the enzyme in this species is believed to be plastoquinone. Couples the redox reaction to proton translocation, and thus conserves the redox energy in a proton gradient. The sequence is that of NAD(P)H-quinone oxidoreductase subunit 6, chloroplastic (ndhG) from Nicotiana tabacum (Common tobacco).